Consider the following 688-residue polypeptide: Soluble guanylate cyclase gcy-35 (688 aa).

His-105 is a heme binding site. The stretch at 358–401 (LNQSRMSQVELNRTLEETTKKLKKMAQELEIEKQKTDELLCELM) forms a coiled coil. The region spanning 424 to 552 (TLLFTDIVTF…DTVNVANKME (129 aa)) is the Guanylate cyclase domain. Mg(2+)-binding residues include Asp-429 and Asp-473. The disordered stretch occupies residues 644-688 (VENGNSAQNNHNNNNNTHHSGRKLMNGSSVDPGSHHIRSPTCTIS). Low complexity predominate over residues 646–659 (NGNSAQNNHNNNNN).

Belongs to the adenylyl cyclase class-4/guanylyl cyclase family. As to quaternary structure, heterodimer; heterodimerizes with gcy-36, and possibly with other soluble guanylate cyclases. Heme is required as a cofactor. In terms of tissue distribution, expressed in URX, AQR and PQR neurons. Also expressed in ALN, SDQ and BDU neurons, and variably in AVM, PLM and PLN neurons, pharyngeal and body wall muscles, and the excretory cell.

The protein resides in the cytoplasm. It is found in the cell projection. Its subcellular location is the dendrite. It carries out the reaction GTP = 3',5'-cyclic GMP + diphosphate. With respect to regulation, regulated by molecular oxygen, which binds to the heme binding site. Probably not activated by nitric oxide (NO). Plays a central role in social feeding behavior and oxygen sensation by synthesizing 3',5'-cyclic guanosine monophosphate (cGMP) from GTP. Oxygen, which binds to its heme-binding sites, probably regulates social behavior by modulating its activity. cGMP is a common second messenger in sensory transduction and is implicated in oxygen sensation. Indeed, C.elegans exhibits a strong behavioral preference for 5-12% oxygen, avoiding higher and lower oxygen levels; a higher level of oxygen inducing a naturally polymorphic social feeding behavior. Involved in avoidance of hyperoxia and for oxygen-induced aggregation and bordering, probably by mediating oxygen-sensing in URX, AQR and PQR sensory neurons. The chain is Soluble guanylate cyclase gcy-35 (gcy-35) from Caenorhabditis elegans.